Consider the following 469-residue polypeptide: Glutamate--tRNA ligase (469 aa).

The 'HIGH' region signature appears at Pro-11–Asn-21. A compositionally biased stretch (basic and acidic residues) spans Gly-118–Pro-131. Positions Gly-118–Pro-138 are disordered. Positions Lys-243 to Arg-247 match the 'KMSKS' region motif. Lys-246 is an ATP binding site.

This sequence belongs to the class-I aminoacyl-tRNA synthetase family. Glutamate--tRNA ligase type 1 subfamily. In terms of assembly, monomer.

Its subcellular location is the cytoplasm. The enzyme catalyses tRNA(Glu) + L-glutamate + ATP = L-glutamyl-tRNA(Glu) + AMP + diphosphate. Its function is as follows. Catalyzes the attachment of glutamate to tRNA(Glu) in a two-step reaction: glutamate is first activated by ATP to form Glu-AMP and then transferred to the acceptor end of tRNA(Glu). The sequence is that of Glutamate--tRNA ligase from Burkholderia vietnamiensis (strain G4 / LMG 22486) (Burkholderia cepacia (strain R1808)).